Consider the following 228-residue polypeptide: PKHD-type hydroxylase XCV3086 (228 aa).

The Fe2OG dioxygenase domain occupies 78 to 180 (RIYPPLFNRY…RVACFFWTQS (103 aa)). 3 residues coordinate Fe cation: histidine 96, aspartate 98, and histidine 161. Residue arginine 171 participates in 2-oxoglutarate binding.

Fe(2+) is required as a cofactor. It depends on L-ascorbate as a cofactor.

The chain is PKHD-type hydroxylase XCV3086 from Xanthomonas euvesicatoria pv. vesicatoria (strain 85-10) (Xanthomonas campestris pv. vesicatoria).